The sequence spans 539 residues: Eukaryotic translation initiation factor 3 subunit L (539 aa).

The PCI domain maps to 306-514; it reads TFSDILLYIQ…IHIADTKVSH (209 aa).

It belongs to the eIF-3 subunit L family. As to quaternary structure, component of the eukaryotic translation initiation factor 3 (eIF-3) complex. The eIF-3 complex interacts with pix.

Its subcellular location is the cytoplasm. Component of the eukaryotic translation initiation factor 3 (eIF-3) complex, which is involved in protein synthesis of a specialized repertoire of mRNAs and, together with other initiation factors, stimulates binding of mRNA and methionyl-tRNAi to the 40S ribosome. The eIF-3 complex specifically targets and initiates translation of a subset of mRNAs involved in cell proliferation. This Drosophila sechellia (Fruit fly) protein is Eukaryotic translation initiation factor 3 subunit L.